The sequence spans 69 residues: uncharacterized protein (69 aa).

4Fe-4S ferredoxin-type domains are found at residues 2-30 (KIEI…KSKK) and 38-67 (PPIP…IELS). Residues cysteine 10, cysteine 13, cysteine 16, cysteine 20, cysteine 47, cysteine 50, cysteine 53, and cysteine 57 each coordinate [4Fe-4S] cluster.

[4Fe-4S] cluster is required as a cofactor.

This is an uncharacterized protein from Methanocaldococcus jannaschii (strain ATCC 43067 / DSM 2661 / JAL-1 / JCM 10045 / NBRC 100440) (Methanococcus jannaschii).